Here is a 536-residue protein sequence, read N- to C-terminus: SNW domain-containing protein 1 (536 aa).

A disordered region spans residues 1-44 (MALTSFLPAPTQLSQDQLEAEERARSQRSLQTSLVSSRREPPPY). At Ala-2 the chain carries N-acetylalanine. Ser-14 is modified (phosphoserine). Residues 27 to 36 (QRSLQTSLVS) are compositionally biased toward polar residues. The interval 59-79 (GDGGAFPEIHVAQYPLDMGRK) is interaction with PPIL1. Glycyl lysine isopeptide (Lys-Gly) (interchain with G-Cter in SUMO2) cross-links involve residues Lys-81, Lys-97, Lys-115, Lys-122, Lys-141, Lys-158, and Lys-170. Residues 174–339 (AQYIRYTPSQ…KARERRAGIK (166 aa)) are SNW. 2 positions are modified to phosphoserine: Ser-182 and Ser-190. Residue Lys-193 forms a Glycyl lysine isopeptide (Lys-Gly) (interchain with G-Cter in SUMO2) linkage. Positions 212–233 (FKINKKIPRGPPSPPAPVMHSP) are disordered. Phosphoserine is present on residues Ser-224, Ser-232, and Ser-234. Glycyl lysine isopeptide (Lys-Gly) (interchain with G-Cter in SUMO2) cross-links involve residues Lys-240, Lys-258, Lys-286, Lys-339, Lys-344, Lys-416, and Lys-441. Residues 311–386 (KMAQKEKEKH…RSKLQRNENR (76 aa)) are disordered. Position 446 is a phosphoserine (Ser-446). Lys-452 is covalently cross-linked (Glycyl lysine isopeptide (Lys-Gly) (interchain with G-Cter in SUMO2)). 2 stretches are compositionally biased toward basic and acidic residues: residues 467 to 489 (IKTN…RGRE) and 503 to 530 (KFLE…EHEG). The disordered stretch occupies residues 467–536 (IKTNRFVPDK…EHEGKKRRKE (70 aa)). Phosphoserine is present on residues Ser-479 and Ser-481. A Glycyl lysine isopeptide (Lys-Gly) (interchain with G-Cter in SUMO2) cross-link involves residue Lys-509.

Belongs to the SNW family. In terms of assembly, identified in the spliceosome C complex. Associates with U4/U6-U5 tri-small nuclear ribonucleoproteins (U4/U6-U5 tri-snRNPs). Component of the minor spliceosome, which splices U12-type introns. Interacts with SKI, SMAD2,SMAD3, RBPJ, RB1, PABPN1, MAGEA1, SIRT1, FOXN3, U2AF2, PPIL1, DAXX and ATP1B4. Interacts with VDR and RXRA; preferentially associates with VDR:RXRA heterodimers. Interacts with NCOR2. Interacts with MAML1. Interacts with NOTCH1 NICD; the interaction involves multimerized NOTCH1 NICD. Forms a complex with NOTCH1 NICD and MAML1; the association is dissociated by RBPJ. Associates with positive transcription elongation factor b (P-TEFb). Component of the SNARP complex which consists at least of SNIP1, SNW1, THRAP3, BCLAF1 and PNN.

It is found in the nucleus. Functionally, involved in pre-mRNA splicing as component of the spliceosome. As a component of the minor spliceosome, involved in the splicing of U12-type introns in pre-mRNAs. Required in the specific splicing of CDKN1A pre-mRNA; the function probably involves the recruitment of U2AF2 to the mRNA. May recruit PPIL1 to the spliceosome. May be involved in cyclin-D1/CCND1 mRNA stability through the SNARP complex which associates with both the 3'end of the CCND1 gene and its mRNA. Involved in transcriptional regulation. Modulates TGF-beta-mediated transcription via association with SMAD proteins, MYOD1-mediated transcription via association with PABPN1, RB1-mediated transcriptional repression, and retinoid-X receptor (RXR)- and vitamin D receptor (VDR)-dependent gene transcription in a cell line-specific manner probably involving coactivators NCOA1 and GRIP1. Is involved in NOTCH1-mediated transcriptional activation. Binds to multimerized forms of Notch intracellular domain (NICD) and is proposed to recruit transcriptional coactivators such as MAML1 to form an intermediate preactivation complex which associates with DNA-bound CBF-1/RBPJ to form a transcriptional activation complex by releasing SNW1 and redundant NOTCH1 NICD. This is SNW domain-containing protein 1 (Snw1) from Mus musculus (Mouse).